Here is a 161-residue protein sequence, read N- to C-terminus: V-type proton ATPase 16 kDa proteolipid subunit c 2 (161 aa).

The Lumenal segment spans residues 1–15 (MSYDLETAEHAAYAP). The helical transmembrane segment at 16-36 (FFGYMGAASAQIFTVLGAAYG) threads the bilayer. Topologically, residues 37–58 (TAKSAVGICSMGVMRPELIMKS) are cytoplasmic. The chain crosses the membrane as a helical span at residues 59–79 (VIPVIMAGIIGIYGLVVAMVL). Residues 80-98 (KGKVQAASAGYDLNKGFAH) are Lumenal-facing. The chain crosses the membrane as a helical span at residues 99–119 (LAAGLTCGLCGLGAGYAIGIV). Residues 120-137 (GDAGVRGTAQQPRLFVGM) lie on the Cytoplasmic side of the membrane. Residues 138-158 (ILILIFSEVLGLYGMIVALIL) form a helical membrane-spanning segment. The Lumenal segment spans residues 159-161 (GTS).

Belongs to the V-ATPase proteolipid subunit family. As to quaternary structure, V-ATPase is a heteromultimeric enzyme made up of two complexes: the ATP-hydrolytic V1 complex and the proton translocation V0 complex. The V1 complex consists of three catalytic AB heterodimers that form a heterohexamer, three peripheral stalks each consisting of EG heterodimers, one central rotor including subunits D and F, and the regulatory subunits C and H. The proton translocation complex V0 consists of the proton transport subunit a, a ring of proteolipid subunits c9c'', rotary subunit d, subunits e and f, and the accessory subunits vah-19/Ac45 and vah-20/PRR.

The protein localises to the membrane. Functionally, proton-conducting pore forming subunit of the V0 complex of vacuolar(H+)-ATPase (V-ATPase), a multisubunit enzyme composed of a peripheral complex (V1) that hydrolyzes ATP and a membrane integral complex (V0) that translocates protons. V-ATPase is responsible for acidifying and maintaining the pH of intracellular compartments and in some cell types, is targeted to the plasma membrane, where it is responsible for acidifying the extracellular environment. Involved in necrotic cell death. Required along with other vacuolar ATPase components for the removal of protein aggregates which form in immature oocytes in the distal gonad. This removal occurs as the oocytes mature and move to the proximal gonad, is triggered by the introduction of sperm through mating and occurs before fertilization. The introduction of sperm triggers V-ATPase accumulation in proximal oocytes and induces lysosomal acidification which leads to engulfing of protein aggregates by lysosomes and subsequent clearance of the aggregates. Lysosomal acidification also leads to changes in mitochondrial morphology and function. Mitochondria in distal immature oocytes are fragmented, produce high levels of reactive oxygen species (ROS) and have high membrane potential, indicative of metabolic inactivity. In contrast, mitochondria in proximal mature oocytes are tubular with lower ROS levels and membrane potential, indicative of an active metabolic state required for aggregate mobilization before clearance. This Caenorhabditis briggsae protein is V-type proton ATPase 16 kDa proteolipid subunit c 2.